The chain runs to 401 residues: uncharacterized protein (401 aa).

10 helical membrane passes run Phe-20–Tyr-40, Ile-49–Ala-69, Ile-83–Ala-100, Tyr-104–Ile-121, Val-140–Met-160, Pro-167–Leu-187, Phe-207–Tyr-227, Met-248–Val-268, Leu-289–Val-309, and Gly-357–Leu-377.

The protein belongs to the major facilitator superfamily.

The protein resides in the cell membrane. This is an uncharacterized protein from Bacillus subtilis (strain 168).